A 757-amino-acid polypeptide reads, in one-letter code: RNA-directed RNA polymerase catalytic subunit (757 aa).

Positions 50-81 are disordered; it reads SEKGKWTTNTETGAPQLNPIDGPLPENHEPSG. The span at 55–64 shows a compositional bias: polar residues; it reads WTTNTETGAP. 2 short sequence motifs (nuclear localization signal) span residues 187-195 and 203-216; these read RKRRIRDNM and RTIGKKKQRLNKKS. Positions 249–256 are promoter-binding site; sequence RGFVYFVE. In terms of domain architecture, RdRp catalytic spans 286–483; that stretch reads VRKMMTNSQD…GINMSKKKSY (198 aa).

The protein belongs to the influenza viruses polymerase PB1 family. In terms of assembly, influenza RNA polymerase is composed of three subunits: PB1, PB2 and PA. Interacts (via N-terminus) with PA (via C-terminus). Interacts (via C-terminus) with PB2 (via N-terminus); this interaction is essential for transcription initiation. Phosphorylated by host PRKCA.

Its subcellular location is the host nucleus. It localises to the host cytoplasm. It catalyses the reaction RNA(n) + a ribonucleoside 5'-triphosphate = RNA(n+1) + diphosphate. RNA-dependent RNA polymerase which is responsible for replication and transcription of virus RNA segments. The transcription of viral mRNAs occurs by a unique mechanism called cap-snatching. 5' methylated caps of cellular mRNAs are cleaved after 10-13 nucleotides by PA. In turn, these short capped RNAs are used as primers by PB1 for transcription of viral mRNAs. During virus replication, PB1 initiates RNA synthesis and copy vRNA into complementary RNA (cRNA) which in turn serves as a template for the production of more vRNAs. The chain is RNA-directed RNA polymerase catalytic subunit from Aves (Cat).